The sequence spans 93 residues: Large ribosomal subunit protein bL31 (93 aa).

Positions 68–93 are disordered; sequence GSADAAADEKKPDAKNNNKDNTSKED. A compositionally biased stretch (basic and acidic residues) spans 74–93; sequence ADEKKPDAKNNNKDNTSKED.

The protein belongs to the bacterial ribosomal protein bL31 family. Type A subfamily. Part of the 50S ribosomal subunit.

In terms of biological role, binds the 23S rRNA. The sequence is that of Large ribosomal subunit protein bL31 from Prochlorococcus marinus (strain MIT 9313).